A 416-amino-acid polypeptide reads, in one-letter code: N-acetyl-L-cysteine deacetylase (416 aa).

Residues Cys-128, His-130, Glu-164, His-188, and His-380 each contribute to the Zn(2+) site.

This sequence belongs to the peptidase M20 family. Zn(2+) serves as cofactor. Co(2+) is required as a cofactor.

The enzyme catalyses N-acetyl-L-cysteine + H2O = L-cysteine + acetate. It participates in amino-acid metabolism. Functionally, involved in a cysteine salvage pathway from S-alkylcysteine. Catalyzes the last step in this pathway, i.e. the deacetylation of N-acetyl-L-cysteine. This pathway is likely important in the catabolism of alkylated cysteine generated by proteolysis of alkylated glutathione formed in the detoxification of a wide range of electrophiles. The chain is N-acetyl-L-cysteine deacetylase from Bacillus subtilis (strain 168).